The chain runs to 385 residues: Protein-glutamate methylesterase/protein-glutamine glutaminase (385 aa).

The Response regulatory domain occupies 20 to 138 (RVMIVDDSVV…EASAADIFKH (119 aa)). 4-aspartylphosphate is present on Asp-71. A CheB-type methylesterase domain is found at 189–383 (GVTAPRVLLI…PKLVRLFSGD (195 aa)). Active-site residues include Ser-201, His-229, and Asp-325.

Belongs to the CheB family. In terms of processing, phosphorylated by CheA. Phosphorylation of the N-terminal regulatory domain activates the methylesterase activity.

It is found in the cytoplasm. The catalysed reaction is [protein]-L-glutamate 5-O-methyl ester + H2O = L-glutamyl-[protein] + methanol + H(+). It catalyses the reaction L-glutaminyl-[protein] + H2O = L-glutamyl-[protein] + NH4(+). Involved in chemotaxis. Part of a chemotaxis signal transduction system that modulates chemotaxis in response to various stimuli. Catalyzes the demethylation of specific methylglutamate residues introduced into the chemoreceptors (methyl-accepting chemotaxis proteins or MCP) by CheR. Also mediates the irreversible deamidation of specific glutamine residues to glutamic acid. The sequence is that of Protein-glutamate methylesterase/protein-glutamine glutaminase from Rhodopseudomonas palustris (strain BisB5).